The sequence spans 408 residues: uncharacterized protein (408 aa).

12 consecutive transmembrane segments (helical) span residues 9 to 29 (WFVL…RNSF), 49 to 69 (VSVS…GFFI), 77 to 97 (IMAL…YSPN), 100 to 120 (VFSA…VGVT), 135 to 155 (LALA…SPIW), 167 to 187 (TYTI…VFGM), 216 to 236 (LIHI…IIDA), 252 to 272 (GMMA…GWLS), 283 to 303 (SILF…ILGI), 308 to 328 (LWYF…IPLT), 340 to 360 (LIGS…ALSV), and 373 to 393 (YLLI…IELV).

The protein belongs to the major facilitator superfamily.

It is found in the cell membrane. This is an uncharacterized protein from Bacillus subtilis (strain 168).